An 882-amino-acid polypeptide reads, in one-letter code: Holliday junction resolvase MOC1, chloroplastic (882 aa).

Disordered regions lie at residues 87-148 and 323-351; these read IRDG…QTPT and TPAA…PRAA. Over residues 91-111 the composition is skewed to polar residues; it reads PNSNSRCSTVRTHATRSKSTG. Low complexity predominate over residues 112 to 125; it reads PSRATSSGPATAAP. The span at 134 to 148 shows a compositional bias: polar residues; it reads NDTQDGGLTSEQTPT. The segment covering 323–337 has biased composition (low complexity); that stretch reads TPAAASQTPPTTVTS. D397, E552, N629, and D634 together coordinate Mg(2+). The tract at residues 710 to 882 is disordered; that stretch reads KVERKAQARS…DGGVSGSESE (173 aa). Residues 732–743 are compositionally biased toward acidic residues; the sequence is EEPEAQAEEEQA. Low complexity-rich tracts occupy residues 744 to 758, 769 to 783, 810 to 819, and 830 to 844; these read EAGT…GAAA, VESG…VAAG, SGKSSSKAEA, and ASVG…SVGS. Gly residues-rich tracts occupy residues 845–857 and 868–882; these read SSGG…GGVK and AKAG…SESE.

Requires Mg(2+) as cofactor. Mn(2+) serves as cofactor.

It localises to the plastid. It is found in the chloroplast. The enzyme catalyses Endonucleolytic cleavage at a junction such as a reciprocal single-stranded crossover between two homologous DNA duplexes (Holliday junction).. Its function is as follows. A structure-specific endonuclease that resolves Holliday junction (HJ) intermediates during genetic recombination. Cleaves 4-way DNA junctions introducing paired nicks in opposing strands, leaving a 5'-terminal phosphate and a 3'-terminal hydroxyl group that are ligated to produce recombinant products. Mediates chloroplast nucleoid segregation during chloroplast division. This Chlamydomonas reinhardtii (Chlamydomonas smithii) protein is Holliday junction resolvase MOC1, chloroplastic.